A 122-amino-acid chain; its full sequence is Large ribosomal subunit protein uL14 (122 aa).

It belongs to the universal ribosomal protein uL14 family. In terms of assembly, part of the 50S ribosomal subunit. Forms a cluster with proteins L3 and L19. In the 70S ribosome, L14 and L19 interact and together make contacts with the 16S rRNA in bridges B5 and B8. Interacts with ribosomal silencing factor RsfS, which may inhibit ribosomal subunit association.

Binds to 23S rRNA. Forms part of two intersubunit bridges in the 70S ribosome. The protein is Large ribosomal subunit protein uL14 of Treponema pallidum (strain Nichols).